The primary structure comprises 205 residues: Ribosomal RNA small subunit methyltransferase G (205 aa).

Residues Gly-76, Leu-81, 127 to 128 (IE), and Arg-140 contribute to the S-adenosyl-L-methionine site.

Belongs to the methyltransferase superfamily. RNA methyltransferase RsmG family.

It localises to the cytoplasm. It catalyses the reaction guanosine(527) in 16S rRNA + S-adenosyl-L-methionine = N(7)-methylguanosine(527) in 16S rRNA + S-adenosyl-L-homocysteine. In terms of biological role, specifically methylates the N7 position of guanine in position 527 of 16S rRNA. The sequence is that of Ribosomal RNA small subunit methyltransferase G from Francisella tularensis subsp. holarctica (strain FTNF002-00 / FTA).